Reading from the N-terminus, the 260-residue chain is MLEILYQDEWLVAVNKPSGWLVHRSWLDRDEKVVVMQTVRDQIGQHVFTAHRLDRPTSGVLLMGLSSEAGRLLAQQFEQHQIQKRYHAIVRGWLMEEAVLDYPLAEELDKIADKFAREDKGPQPAVTHYRGLATVEMPVATGRYPTTRYGLVELEPKTGRKHQLRRHLAHLRHPIIGDSKHGDLRQNRSGAEHFGLQRLMLHASQLSLTHPFTGEPLAIHAGLDDTWMQALSQFGWRGLLPENERVEFSAPSGQDGEISS.

Aspartate 54 is a catalytic residue.

It belongs to the pseudouridine synthase RluA family.

It carries out the reaction uridine(65) in tRNA = pseudouridine(65) in tRNA. Responsible for synthesis of pseudouridine from uracil-65 in transfer RNAs. This is tRNA pseudouridine synthase C (truC) from Escherichia coli O6:H1 (strain CFT073 / ATCC 700928 / UPEC).